The sequence spans 244 residues: Mitochondrial inner membrane protease atp23 (244 aa).

The interval 1-22 is disordered; that stretch reads MASTDDNKPPTASDFAKDAEPQ. His-144 serves as a coordination point for a divalent metal cation. Glu-145 is a catalytic residue. A divalent metal cation is bound at residue His-148.

Belongs to the peptidase M76 family.

It localises to the mitochondrion inner membrane. Has a dual role in the assembly of mitochondrial ATPase. Acts as a protease that removes N-terminal residues of mitochondrial ATPase CF(0) subunit 6 at the intermembrane space side. Also involved in the correct assembly of the membrane-embedded ATPase CF(0) particle, probably mediating association of subunit 6 with the subunit 9 ring. The polypeptide is Mitochondrial inner membrane protease atp23 (atp23) (Sclerotinia sclerotiorum (strain ATCC 18683 / 1980 / Ss-1) (White mold)).